A 214-amino-acid polypeptide reads, in one-letter code: Pyridoxine/pyridoxamine 5'-phosphate oxidase (214 aa).

Residues 9-12 (RREY) and K67 contribute to the substrate site. FMN is bound by residues 62 to 67 (RTVLLK), 77 to 78 (YS), R83, K84, and Q106. Substrate is bound by residues Y124, R128, and S132. FMN contacts are provided by residues 141–142 (QS) and W186. Substrate is bound at residue 192–194 (RLH). R196 serves as a coordination point for FMN.

Belongs to the pyridoxamine 5'-phosphate oxidase family. In terms of assembly, homodimer. Requires FMN as cofactor.

The catalysed reaction is pyridoxamine 5'-phosphate + O2 + H2O = pyridoxal 5'-phosphate + H2O2 + NH4(+). It catalyses the reaction pyridoxine 5'-phosphate + O2 = pyridoxal 5'-phosphate + H2O2. Its pathway is cofactor metabolism; pyridoxal 5'-phosphate salvage; pyridoxal 5'-phosphate from pyridoxamine 5'-phosphate: step 1/1. It functions in the pathway cofactor metabolism; pyridoxal 5'-phosphate salvage; pyridoxal 5'-phosphate from pyridoxine 5'-phosphate: step 1/1. Its function is as follows. Catalyzes the oxidation of either pyridoxine 5'-phosphate (PNP) or pyridoxamine 5'-phosphate (PMP) into pyridoxal 5'-phosphate (PLP). This chain is Pyridoxine/pyridoxamine 5'-phosphate oxidase, found in Porphyromonas gingivalis (strain ATCC 33277 / DSM 20709 / CIP 103683 / JCM 12257 / NCTC 11834 / 2561).